The following is a 314-amino-acid chain: Homoserine kinase (314 aa).

95–105 serves as a coordination point for ATP; the sequence is PHSRGLGSSAS.

This sequence belongs to the GHMP kinase family. Homoserine kinase subfamily.

The protein localises to the cytoplasm. The enzyme catalyses L-homoserine + ATP = O-phospho-L-homoserine + ADP + H(+). It participates in amino-acid biosynthesis; L-threonine biosynthesis; L-threonine from L-aspartate: step 4/5. In terms of biological role, catalyzes the ATP-dependent phosphorylation of L-homoserine to L-homoserine phosphate. This is Homoserine kinase from Mycobacterium ulcerans (strain Agy99).